Consider the following 139-residue polypeptide: uncharacterized protein (139 aa).

The first 32 residues, 1-32 (MEFHDDKKNELQKKEEIITEAIDTLFQSSAFG), serve as a signal peptide directing secretion. A sHSP domain is found at 44-139 (SSLKDVQTTI…TLFFPKNKHE (96 aa)).

It belongs to the small heat shock protein (HSP20) family.

This is an uncharacterized protein from Bacillus subtilis (strain 168).